The chain runs to 242 residues: Venom nerve growth factor 1 (242 aa).

Residues 1-18 form the signal peptide; the sequence is MSMLCYTLIIAFLIGIWA. The propeptide occupies 19–125; it reads APKSEDNVPL…ALNRNIRSKR (107 aa). The tract at residues 26 to 69 is disordered; it reads VPLGSPATSDLSDTSCAQTHKALKTSRNTDQRHPAPKKAEDQEL. The span at 31-43 shows a compositional bias: polar residues; that stretch reads PATSDLSDTSCAQ. The span at 52 to 66 shows a compositional bias: basic and acidic residues; the sequence is RNTDQRHPAPKKAED. 3 cysteine pairs are disulfide-bonded: cysteine 139/cysteine 203, cysteine 181/cysteine 231, and cysteine 191/cysteine 233. N-linked (GlcNAc...) asparagine glycosylation is present at asparagine 147.

Belongs to the NGF-beta family. As to quaternary structure, homodimer; non-covalently linked. In terms of tissue distribution, expressed by the venom gland.

It localises to the secreted. Functionally, nerve growth factor is important for the development and maintenance of the sympathetic and sensory nervous systems. It stimulates division and differentiation of sympathetic and embryonic sensory neurons as well as basal forebrain cholinergic neurons in the brain. Its relevance in the snake venom is not clear. However, it has been shown to inhibit metalloproteinase-dependent proteolysis of platelet glycoprotein Ib alpha, suggesting a metalloproteinase inhibition to prevent metalloprotease autodigestion and/or protection against prey proteases. Binds a lipid between the two protein chains in the homodimer. The lipid-bound form promotes histamine relase from mouse mast cells, contrary to the lipid-free form. This Demansia vestigiata (Lesser black whip snake) protein is Venom nerve growth factor 1.